The following is a 61-amino-acid chain: MDIKQLREKSADELKAHLTDLRKEQFSLRMQQVTGQLPKTHETRRVRREIARVKHLLGSTK.

This sequence belongs to the universal ribosomal protein uL29 family.

This is Large ribosomal subunit protein uL29 from Xanthomonas euvesicatoria pv. vesicatoria (strain 85-10) (Xanthomonas campestris pv. vesicatoria).